Consider the following 182-residue polypeptide: Peptidoglycan-recognition protein SB2 (182 aa).

The signal sequence occupies residues 1–17 (MKLQLALVLCGLTLALG). In terms of domain architecture, N-acetylmuramoyl-L-alanine amidase spans 40-165 (PVRLIIIHHT…CQTKATACPG (126 aa)). His-47 serves as a coordination point for Zn(2+). The cysteines at positions 54 and 60 are disulfide-linked. N-linked (GlcNAc...) asparagine glycosylation is present at Asn-149. 2 residues coordinate Zn(2+): His-155 and Cys-163.

The protein belongs to the N-acetylmuramoyl-L-alanine amidase 2 family. Requires Zn(2+) as cofactor.

Its subcellular location is the secreted. The enzyme catalyses Hydrolyzes the link between N-acetylmuramoyl residues and L-amino acid residues in certain cell-wall glycopeptides.. In terms of biological role, N-acetylmuramyl-L-alanine amidase involved in innate immunity by degrading bacterial peptidoglycans (PGN). Probably plays a scavenger role by digesting biologically active PGN into biologically inactive fragments. Has no direct bacteriolytic activity. The protein is Peptidoglycan-recognition protein SB2 (PGRP-SB2) of Drosophila melanogaster (Fruit fly).